Reading from the N-terminus, the 524-residue chain is Inorganic phosphate transporter 1-1 (524 aa).

The Cytoplasmic portion of the chain corresponds to 1 to 24 (MAEQQLGVLKALDVAKTQLYHFTA). A helical transmembrane segment spans residues 25 to 45 (IVIAGMGFFTDAYDLFCVSLV). At 46–70 (TKLLGRIYYFNPESAKPGSLPPHVA) the chain is on the extracellular side. The helical transmembrane segment at 71-91 (AAVNGVALCGTLSGQLFFGWL) threads the bilayer. Topologically, residues 92–99 (GDKLGRKK) are cytoplasmic. A helical transmembrane segment spans residues 100 to 120 (VYGLTLVMMILCSVASGLSFG). At 121–131 (HEAKGVMTTLC) the chain is on the extracellular side. A helical membrane pass occupies residues 132–152 (FFRFWLGFGIGGDYPLSATIM). Residues 153–161 (SEYANKKTR) lie on the Cytoplasmic side of the membrane. The helical transmembrane segment at 162–182 (GAFIAAVFAMQGVGILAGGFV) threads the bilayer. The Extracellular portion of the chain corresponds to 183–211 (ALAVSSIFDKKFPAPTYAVNRALSTPPQV). The helical transmembrane segment at 212 to 232 (DYIWRIIVMFGALPAALTYYW) threads the bilayer. At 233 to 292 (RMKMPETARYTALVAKNIKQATADMSKVLQTDIELEERVEDDVKDPKQNYGLFSKEFLRR) the chain is on the cytoplasmic side. A helical transmembrane segment spans residues 293–313 (HGLHLLGTTSTWFLLDIAFYS). At 314–348 (QNLFQKDIFSAIGWIPKAATMNATHEVFRIARAQT) the chain is on the extracellular side. The chain crosses the membrane as a helical span at residues 349-369 (LIALCSTVPGYWFTVAFIDTI). Over 370 to 371 (GR) the chain is Cytoplasmic. A helical membrane pass occupies residues 372–392 (FKIQLNGFFMMTVFMFAIAFP). At 393–402 (YNHWIKPENR) the chain is on the extracellular side. A helical transmembrane segment spans residues 403-423 (IGFVVMYSLTFFFANFGPNAT). Residues 424–441 (TFIVPAEIFPARLRSTCH) are Cytoplasmic-facing. The helical transmembrane segment at 442 to 462 (GISAAAGKAGAIVGAFGFLYA) threads the bilayer. The Extracellular segment spans residues 463-484 (AQSQDKAKVDAGYPPGIGVKNS). A helical transmembrane segment spans residues 485–505 (LIMLGVLNFIGMLFTFLVPEP). Over 506-524 (KGKSLEELSGEAEVSHDEK) the chain is Cytoplasmic.

It belongs to the major facilitator superfamily. Phosphate:H(+) symporter (TC 2.A.1.9) family. As to quaternary structure, interacts with NLA. Post-translationally, ubiquitinated by NLA. Ubiquitination of PHT1-1 leads to its degradation by the proteasome. In terms of tissue distribution, mostly expressed in roots, especially in trichoblasts and in emerging secondary roots and root hairs, but not in root tips. Also present in hydathodes, axillary buds and peripheral endosperm of germinating seeds.

Its subcellular location is the cell membrane. Inhibited by protonophores (e.g. 2,4-dinitrophenol and carbonylcyanide m-chlorophenylhydrazone), the plasma membrane H(+)-ATPase inhibitor diethylstilbestorol, and the phosphate analog arsenate. Functionally, high-affinity transporter for external inorganic phosphate. Acts as a H(+):phosphate symporter in both low- and high-Pi conditions. Confers sensitivity to arsenate. The chain is Inorganic phosphate transporter 1-1 (PHT1-1) from Arabidopsis thaliana (Mouse-ear cress).